Here is a 209-residue protein sequence, read N- to C-terminus: Large ribosomal subunit protein uL3 (209 aa).

Gln-150 carries the post-translational modification N5-methylglutamine.

The protein belongs to the universal ribosomal protein uL3 family. As to quaternary structure, part of the 50S ribosomal subunit. Forms a cluster with proteins L14 and L19. Post-translationally, methylated by PrmB.

One of the primary rRNA binding proteins, it binds directly near the 3'-end of the 23S rRNA, where it nucleates assembly of the 50S subunit. The chain is Large ribosomal subunit protein uL3 from Pasteurella multocida (strain Pm70).